The sequence spans 37 residues: Large ribosomal subunit protein bL36c (37 aa).

It belongs to the bacterial ribosomal protein bL36 family.

Its subcellular location is the plastid. The chain is Large ribosomal subunit protein bL36c from Cuscuta exaltata (Tall dodder).